We begin with the raw amino-acid sequence, 342 residues long: Ribosomal RNA small subunit methyltransferase C (342 aa).

It belongs to the methyltransferase superfamily. RsmC family. As to quaternary structure, monomer.

Its subcellular location is the cytoplasm. The catalysed reaction is guanosine(1207) in 16S rRNA + S-adenosyl-L-methionine = N(2)-methylguanosine(1207) in 16S rRNA + S-adenosyl-L-homocysteine + H(+). In terms of biological role, specifically methylates the guanine in position 1207 of 16S rRNA in the 30S particle. This is Ribosomal RNA small subunit methyltransferase C from Aeromonas hydrophila subsp. hydrophila (strain ATCC 7966 / DSM 30187 / BCRC 13018 / CCUG 14551 / JCM 1027 / KCTC 2358 / NCIMB 9240 / NCTC 8049).